The chain runs to 264 residues: Glutamate racemase (264 aa).

Substrate-binding positions include aspartate 10–serine 11 and tyrosine 42–glycine 43. The Proton donor/acceptor role is filled by cysteine 73. Asparagine 74 to threonine 75 serves as a coordination point for substrate. Catalysis depends on cysteine 181, which acts as the Proton donor/acceptor. Threonine 182 to histidine 183 contacts substrate.

The protein belongs to the aspartate/glutamate racemases family.

It carries out the reaction L-glutamate = D-glutamate. The protein operates within cell wall biogenesis; peptidoglycan biosynthesis. In terms of biological role, provides the (R)-glutamate required for cell wall biosynthesis. This chain is Glutamate racemase, found in Thermoanaerobacter pseudethanolicus (strain ATCC 33223 / 39E) (Clostridium thermohydrosulfuricum).